A 418-amino-acid chain; its full sequence is Gamma-glutamyl phosphate reductase (418 aa).

Belongs to the gamma-glutamyl phosphate reductase family.

Its subcellular location is the cytoplasm. It carries out the reaction L-glutamate 5-semialdehyde + phosphate + NADP(+) = L-glutamyl 5-phosphate + NADPH + H(+). It participates in amino-acid biosynthesis; L-proline biosynthesis; L-glutamate 5-semialdehyde from L-glutamate: step 2/2. Catalyzes the NADPH-dependent reduction of L-glutamate 5-phosphate into L-glutamate 5-semialdehyde and phosphate. The product spontaneously undergoes cyclization to form 1-pyrroline-5-carboxylate. The chain is Gamma-glutamyl phosphate reductase from Desulfotalea psychrophila (strain LSv54 / DSM 12343).